The primary structure comprises 331 residues: Oxygen-evolving enhancer protein 1-2, chloroplastic (331 aa).

The N-terminal 57 residues, 1–57 (MATSLQAAATFLQPAKIAASPSRNVHLRSNQTVGKSFGLDSSQARLTCSLHSDLKDF), are a transit peptide targeting the chloroplast. The transit peptide at 58–84 (AGKCSDAAKIAGFALATSALVVSGAGA) directs the protein to the thylakoid.

This sequence belongs to the PsbO family.

Its subcellular location is the plastid. The protein localises to the chloroplast thylakoid membrane. Its function is as follows. Stabilizes the manganese cluster which is the primary site of water splitting. Regulates dephosphorylation and turnover of the PSII reaction center D1 protein. This is Oxygen-evolving enhancer protein 1-2, chloroplastic (PSBO2) from Arabidopsis thaliana (Mouse-ear cress).